The sequence spans 105 residues: UPF0251 protein AF_0666 (105 aa).

It belongs to the UPF0251 family.

This Archaeoglobus fulgidus (strain ATCC 49558 / DSM 4304 / JCM 9628 / NBRC 100126 / VC-16) protein is UPF0251 protein AF_0666.